Consider the following 265-residue polypeptide: Glutamate racemase (265 aa).

Residues 12-13 and 44-45 contribute to the substrate site; these read DS and YG. Cys-75 (proton donor/acceptor) is an active-site residue. A substrate-binding site is contributed by 76–77; it reads NT. Cys-186 acts as the Proton donor/acceptor in catalysis. A substrate-binding site is contributed by 187–188; it reads TH.

This sequence belongs to the aspartate/glutamate racemases family.

The catalysed reaction is L-glutamate = D-glutamate. It functions in the pathway cell wall biogenesis; peptidoglycan biosynthesis. Its function is as follows. Provides the (R)-glutamate required for cell wall biosynthesis. In Pseudomonas putida (strain GB-1), this protein is Glutamate racemase.